We begin with the raw amino-acid sequence, 237 residues long: Urease accessory protein UreF (237 aa).

This sequence belongs to the UreF family. In terms of assembly, ureD, UreF and UreG form a complex that acts as a GTP-hydrolysis-dependent molecular chaperone, activating the urease apoprotein by helping to assemble the nickel containing metallocenter of UreC. The UreE protein probably delivers the nickel.

The protein localises to the cytoplasm. Its function is as follows. Required for maturation of urease via the functional incorporation of the urease nickel metallocenter. The sequence is that of Urease accessory protein UreF from Methylibium petroleiphilum (strain ATCC BAA-1232 / LMG 22953 / PM1).